The chain runs to 290 residues: Small ribosomal subunit protein bS6 (290 aa).

A disordered region spans residues 208–233; that stretch reads VEEAKTTAKKPAAPKMSAAERAKVDG.

The protein belongs to the bacterial ribosomal protein bS6 family.

Functionally, binds together with bS18 to 16S ribosomal RNA. The chain is Small ribosomal subunit protein bS6 from Mesoplasma florum (strain ATCC 33453 / NBRC 100688 / NCTC 11704 / L1) (Acholeplasma florum).